Here is a 95-residue protein sequence, read N- to C-terminus: Aspartyl/glutamyl-tRNA(Asn/Gln) amidotransferase subunit C (95 aa).

This sequence belongs to the GatC family. In terms of assembly, heterotrimer of A, B and C subunits.

The catalysed reaction is L-glutamyl-tRNA(Gln) + L-glutamine + ATP + H2O = L-glutaminyl-tRNA(Gln) + L-glutamate + ADP + phosphate + H(+). It carries out the reaction L-aspartyl-tRNA(Asn) + L-glutamine + ATP + H2O = L-asparaginyl-tRNA(Asn) + L-glutamate + ADP + phosphate + 2 H(+). Its function is as follows. Allows the formation of correctly charged Asn-tRNA(Asn) or Gln-tRNA(Gln) through the transamidation of misacylated Asp-tRNA(Asn) or Glu-tRNA(Gln) in organisms which lack either or both of asparaginyl-tRNA or glutaminyl-tRNA synthetases. The reaction takes place in the presence of glutamine and ATP through an activated phospho-Asp-tRNA(Asn) or phospho-Glu-tRNA(Gln). The chain is Aspartyl/glutamyl-tRNA(Asn/Gln) amidotransferase subunit C from Dinoroseobacter shibae (strain DSM 16493 / NCIMB 14021 / DFL 12).